Reading from the N-terminus, the 87-residue chain is U-actitoxin-Avd3n (87 aa).

Positions 1–16 (MVFLLCFFLVADVSYG) are cleaved as a signal peptide. The 51-residue stretch at 21 to 71 (CLLPKVVGFCRARFPRYYYNSSSRRCEKFIYGGCGGNANNFSSYYECHIKC) folds into the BPTI/Kunitz inhibitor domain. Intrachain disulfides connect C21/C71, C30/C54, and C46/C67. A propeptide spanning residues 76-87 (AIIFPEDSPKEN) is cleaved from the precursor.

Belongs to the venom Kunitz-type family. Sea anemone type 2 potassium channel toxin subfamily.

The protein resides in the secreted. It localises to the nematocyst. In terms of biological role, kunitz peptide that directly activates neuronal GIRK1/2 (KCNJ3/KCNJ6) channels (EC(50)=80.9 uM) resulting in larger K+ currents. This activation is independent from Gi/o protein activity, and has only a minor effect on Kv1.6/KCNA6 channels (13.5% inhibition at 1 uM). Serine protease inhibitor that inhibits both tissue and plasma kallikreins. Has hemolytic activity. The sequence is that of U-actitoxin-Avd3n from Anemonia viridis (Snakelocks anemone).